The following is a 1256-amino-acid chain: Receptor tyrosine-protein kinase erbB-2 (1256 aa).

The first 22 residues, 1–22 (MELAAWCRWGFLLALLSPGAAG), serve as a signal peptide directing secretion. Over 23–653 (TQVCTGTDMK…PAEQRASPVT (631 aa)) the chain is Extracellular. Cys-26 and Cys-53 form a disulfide bridge. Asn-68, Asn-125, and Asn-188 each carry an N-linked (GlcNAc...) asparagine glycan. Disulfide bonds link Cys-163/Cys-193, Cys-196/Cys-205, Cys-200/Cys-213, Cys-221/Cys-228, Cys-225/Cys-236, Cys-237/Cys-245, Cys-241/Cys-253, Cys-256/Cys-265, Cys-269/Cys-296, Cys-300/Cys-312, Cys-316/Cys-332, Cys-335/Cys-339, Cys-343/Cys-368, Cys-476/Cys-505, Cys-512/Cys-521, and Cys-516/Cys-529. Residue Asn-260 is glycosylated (N-linked (GlcNAc...) asparagine). Asn-531 carries N-linked (GlcNAc...) asparagine glycosylation. Cystine bridges form between Cys-532/Cys-541, Cys-545/Cys-561, Cys-564/Cys-577, Cys-568/Cys-585, Cys-588/Cys-597, Cys-601/Cys-624, Cys-627/Cys-635, and Cys-631/Cys-643. A glycan (N-linked (GlcNAc...) asparagine) is linked at Asn-572. N-linked (GlcNAc...) asparagine glycosylation is present at Asn-630. The chain crosses the membrane as a helical span at residues 654 to 674 (FIIATVVGVLLFLIIVVVIGI). The Cytoplasmic portion of the chain corresponds to 675–1256 (LIKRRRQKIR…PEYLGLDVPV (582 aa)). Residues 677 to 690 (KRRRQKIRKYTMRR) form a required for interaction with KPNB1 and EEA1 region. Positions 677-690 (KRRRQKIRKYTMRR) match the Nuclear localization signal motif. The Protein kinase domain maps to 721–988 (LRKLKVLGSG…RMARDPQRFV (268 aa)). Residues 727–735 (LGSGAFGTV) and Lys-754 each bind ATP. Asp-846 functions as the Proton acceptor in the catalytic mechanism. Tyr-878 carries the phosphotyrosine modification. The tract at residues 1030-1180 (GFFSPDPALG…PKTLSPGKNG (151 aa)) is disordered. Ser-1055, Ser-1079, Ser-1084, and Ser-1108 each carry phosphoserine. Tyr-1113 carries the phosphotyrosine modification. Tyr-1140 is modified (phosphotyrosine; by autocatalysis). At Thr-1167 the chain carries Phosphothreonine. The interaction with PIK3C2B stretch occupies residues 1196–1198 (EYL). Tyr-1197 carries the phosphotyrosine modification. Disordered stretches follow at residues 1200-1219 (PRAG…PAFD) and 1224-1256 (WDQN…DVPV). Residue Tyr-1249 is modified to Phosphotyrosine; by autocatalysis.

Belongs to the protein kinase superfamily. Tyr protein kinase family. EGF receptor subfamily. As to quaternary structure, homodimer. Heterodimer with EGFR, ERBB3 and ERBB4. Part of a complex with EGFR and either PIK3C2A or PIK3C2B. May interact with PIK3C2B when phosphorylated on Tyr-1197. Interacts with PLXNB1. Interacts (when phosphorylated on Tyr-1249) with MEMO1. Interacts with MUC1. Interacts (when phosphorylated on Tyr-1140) with GRB7 (via SH2 domain). Interacts (when phosphorylated on Tyr-1249) with ERBIN. Interacts with KPNB1, RANBP2, EEA1, CRM1, CLTC, PTK6, RPA194 and ACTB. Interacts (preferentially with the tyrosine phosphorylated form) with CPNE3; this interaction occurs at the cell membrane and is increased in a growth factor heregulin-dependent manner. Interacts with HSP90AA1 and HSP90AB1 in an ATP-dependent manner; the interaction suppresses ERBB2 kinase activity. Interacts with SRC. Interacts with MYOC. Interacts with PRKCABP. Interacts with SORL1; this interaction regulates ERBB2 subcellular distribution by promoting its recycling after internalization from endosomes back to the plasma membrane, hence stimulates ERBB2-mediated signaling. Interacts with SH3BGRL. Interacts with ROR1. Post-translationally, autophosphorylated. Autophosphorylation occurs in trans, i.e. one subunit of the dimeric receptor phosphorylates tyrosine residues on the other subunit. Ligand-binding increases phosphorylation on tyrosine residues. Signaling via SEMA4C promotes phosphorylation at Tyr-1249. Dephosphorylated by PTPN12. As to expression, expressed predominantly in uterine epithelial cells. In the muscle, expression localizes to the synaptic sites of muscle fibers.

The protein resides in the cell membrane. Its subcellular location is the cell projection. The protein localises to the ruffle membrane. It is found in the early endosome. It localises to the cytoplasm. The protein resides in the perinuclear region. Its subcellular location is the nucleus. The enzyme catalyses L-tyrosyl-[protein] + ATP = O-phospho-L-tyrosyl-[protein] + ADP + H(+). Functionally, protein tyrosine kinase that is part of several cell surface receptor complexes, but that apparently needs a coreceptor for ligand binding. Essential component of a neuregulin-receptor complex, although neuregulins do not interact with it alone. GP30 is a potential ligand for this receptor. Regulates outgrowth and stabilization of peripheral microtubules (MTs). Upon ERBB2 activation, the MEMO1-RHOA-DIAPH1 signaling pathway elicits the phosphorylation and thus the inhibition of GSK3B at cell membrane. This prevents the phosphorylation of APC and CLASP2, allowing its association with the cell membrane. In turn, membrane-bound APC allows the localization of MACF1 to the cell membrane, which is required for microtubule capture and stabilization. Its function is as follows. In the nucleus is involved in transcriptional regulation. Associates with the 5'-TCAAATTC-3' sequence in the PTGS2/COX-2 promoter and activates its transcription. Implicated in transcriptional activation of CDKN1A; the function involves STAT3 and SRC. Involved in the transcription of rRNA genes by RNA Pol I and enhances protein synthesis and cell growth. This is Receptor tyrosine-protein kinase erbB-2 (Erbb2) from Mus musculus (Mouse).